A 1257-amino-acid polypeptide reads, in one-letter code: Phosphatidylinositol 3,4,5-trisphosphate 5-phosphatase 2 (1257 aa).

The SH2 domain occupies 21–117; that stretch reads WYHRDLSRAA…GLVCALLLPV (97 aa). Over residues 119–132 the composition is skewed to basic and acidic residues; that stretch reads GEREPDPPDDRDAS. The segment at 119–181 is disordered; that stretch reads GEREPDPPDD…ESTPNGLSTV (63 aa). A Phosphoserine modification is found at serine 132. A compositionally biased stretch (pro residues) spans 156-166; sequence PSSPLPAPETP. At threonine 165 the chain carries Phosphothreonine. Phosphoserine is present on residues serine 241 and serine 353. Position 887 is a phosphotyrosine (tyrosine 887). Position 891 is a phosphoserine (serine 891). A disordered region spans residues 897–986; that stretch reads TGAKSKAPSV…PPKNSFNNPA (90 aa). Residues 939–951 show a composition bias toward pro residues; sequence PPPTGRPPAPPRA. An SH3-binding motif is present at residues 945–950; the sequence is PPAPPR. Positions 952–966 are enriched in basic and acidic residues; sequence VPREESLNPRLKSEG. An NPXY motif motif is present at residues 984-987; sequence NPAY. The residue at position 987 (tyrosine 987) is a Phosphotyrosine. The tract at residues 1004-1115 is disordered; that stretch reads SFARAPIPPT…PASTFLEEVA (112 aa). 2 stretches are compositionally biased toward pro residues: residues 1049 to 1060 and 1088 to 1104; these read LPPPDFPPPPLP and GPPP…PPGT. The residue at position 1132 (serine 1132) is a Phosphoserine. Phosphotyrosine is present on residues tyrosine 1136 and tyrosine 1161. The SAM domain maps to 1195–1257; that stretch reads LGEAGMGAWL…LLLDTLQLSK (63 aa). A Phosphoserine modification is found at serine 1256.

This sequence belongs to the inositol 1,4,5-trisphosphate 5-phosphatase family. In terms of assembly, interacts with tyrosine phosphorylated form of SHC1. Interacts with EGFR. Upon stimulation by the EGF signaling pathway, it forms a complex with SHC1 and EGFR. Interacts with cytoskeletal protein SORBS3/vinexin, promoting its localization to the periphery of cells. Forms a complex with filamin (FLNA or FLNB), actin, GPIb (GP1BA or GP1BB) that regulates cortical and submembraneous actin. Interacts with c-Met/MET, when c-Met/MET is phosphorylated on 'Tyr-1356'. Interacts with p130Cas/BCAR1. Interacts with CENTD3/ARAP3 via its SAM domain. Interacts with c-Cbl/CBL and CAP/SORBS1. Interacts with activated EPHA2 receptor. Interacts with receptors FCGR2A. Interacts with FCGR2B. Interacts with tyrosine kinase ABL1. Interacts with tyrosine kinase TEC. Interacts with CSF1R. Interacts (via N-terminus) with SH3YL1 (via SH3 domain). Interacts (via SH2 domain) with tyrosine phosphorylated KLRC1 (via ITIM). Interacts with NEDD9/HEF1. Post-translationally, tyrosine phosphorylated by the members of the SRC family after exposure to a diverse array of extracellular stimuli such as insulin, growth factors such as EGF or PDGF, chemokines, integrin ligands and hypertonic and oxidative stress. May be phosphorylated upon IgG receptor FCGR2B-binding. Phosphorylated at Tyr-987 following cell attachment and spreading. Phosphorylated at Tyr-1161 following EGF signaling pathway stimulation.

It localises to the cytoplasm. The protein localises to the cytosol. The protein resides in the cytoskeleton. It is found in the membrane. Its subcellular location is the cell projection. It localises to the filopodium. The protein localises to the lamellipodium. The protein resides in the basal cell membrane. It is found in the nucleus. Its subcellular location is the nucleus speckle. It localises to the spindle pole. It carries out the reaction a 1,2-diacyl-sn-glycero-3-phospho-(1D-myo-inositol-3,4,5-trisphosphate) + H2O = a 1,2-diacyl-sn-glycero-3-phospho-(1D-myo-inositol-3,4-bisphosphate) + phosphate. It catalyses the reaction 1,2-dioctanoyl-sn-glycero-3-phospho-(1D-myo-inositol-3,4,5-trisphosphate) + H2O = 1,2-dioctanoyl-sn-glycero-3-phospho-(1D-myo-inositol-3,4-bisphosphate) + phosphate. The enzyme catalyses 1,2-dihexadecanoyl-sn-glycero-3-phospho-(1D-myo-inositol-3,4,5-trisphosphate) + H2O = 1,2-dihexadecanoyl-sn-glycero-3-phospho-(1D-myo-inositol-3,4-bisphosphate) + phosphate. Activated upon translocation to the sites of synthesis of PtdIns(3,4,5)P3 in the membrane. Enzymatic activity is enhanced in the presence of phosphatidylserine. Phosphatidylinositol (PtdIns) phosphatase that specifically hydrolyzes the 5-phosphate of phosphatidylinositol-3,4,5-trisphosphate (PtdIns(3,4,5)P3) to produce PtdIns(3,4)P2, thereby negatively regulating the PI3K (phosphoinositide 3-kinase) pathways. Required for correct mitotic spindle orientation and therefore progression of mitosis. Plays a central role in regulation of PI3K-dependent insulin signaling, although the precise molecular mechanisms and signaling pathways remain unclear. While overexpression reduces both insulin-stimulated MAP kinase and Akt activation, its absence does not affect insulin signaling or GLUT4 trafficking. Confers resistance to dietary obesity. May act by regulating AKT2, but not AKT1, phosphorylation at the plasma membrane. Part of a signaling pathway that regulates actin cytoskeleton remodeling. Required for the maintenance and dynamic remodeling of actin structures as well as in endocytosis, having a major impact on ligand-induced EGFR internalization and degradation. Participates in regulation of cortical and submembraneous actin by hydrolyzing PtdIns(3,4,5)P3 thereby regulating membrane ruffling. Regulates cell adhesion and cell spreading. Required for HGF-mediated lamellipodium formation, cell scattering and spreading. Acts as a negative regulator of EPHA2 receptor endocytosis by inhibiting via PI3K-dependent Rac1 activation. Acts as a regulator of neuritogenesis by regulating PtdIns(3,4,5)P3 level and is required to form an initial protrusive pattern, and later, maintain proper neurite outgrowth. Acts as a negative regulator of the FC-gamma-RIIA receptor (FCGR2A). Mediates signaling from the FC-gamma-RIIB receptor (FCGR2B), playing a central role in terminating signal transduction from activating immune/hematopoietic cell receptor systems. Involved in EGF signaling pathway. Upon stimulation by EGF, it is recruited by EGFR and dephosphorylates PtdIns(3,4,5)P3. Plays a negative role in regulating the PI3K-PKB pathway, possibly by inhibiting PKB activity. Down-regulates Fc-gamma-R-mediated phagocytosis in macrophages independently of INPP5D/SHIP1. In macrophages, down-regulates NF-kappa-B-dependent gene transcription by regulating macrophage colony-stimulating factor (M-CSF)-induced signaling. Plays a role in the localization of AURKA and NEDD9/HEF1 to the basolateral membrane at interphase in polarized cysts, thereby mediates cell cycle homeostasis, cell polarization and cilia assembly. Additionally promotion of cilia growth is also facilitated by hydrolysis of (PtdIns(3,4,5)P3) to PtdIns(3,4)P2. Promotes formation of apical membrane-initiation sites during the initial stages of lumen formation via Rho family-induced actin filament organization and CTNNB1 localization to cell-cell contacts. May also hydrolyze PtdIns(1,3,4,5)P4, and could thus affect the levels of the higher inositol polyphosphates like InsP6. Involved in endochondral ossification. The protein is Phosphatidylinositol 3,4,5-trisphosphate 5-phosphatase 2 of Rattus norvegicus (Rat).